A 297-amino-acid chain; its full sequence is Acetylglutamate kinase (297 aa).

Substrate is bound by residues 72–73 (GG), R94, and N187.

It belongs to the acetylglutamate kinase family. ArgB subfamily.

It is found in the cytoplasm. The catalysed reaction is N-acetyl-L-glutamate + ATP = N-acetyl-L-glutamyl 5-phosphate + ADP. The protein operates within amino-acid biosynthesis; L-arginine biosynthesis; N(2)-acetyl-L-ornithine from L-glutamate: step 2/4. Its function is as follows. Catalyzes the ATP-dependent phosphorylation of N-acetyl-L-glutamate. This Synechocystis sp. (strain ATCC 27184 / PCC 6803 / Kazusa) protein is Acetylglutamate kinase.